The following is a 425-amino-acid chain: MAFLALGINHKTASVDVRERVAFTPEQLVDALQQLCHLTESREAAILSTCNRSELYIEHEHLGADSILAWLANYHHLSLEELRASAYVHEDDAAVRHMMRVASGLDSLVLGEPQILGQMKSAYAVAREAGTVGPLLGRLFQATFSAAKQVRTDTAIGENPVSVAFAAVSLAKQIFSDLQRSQALLIGAGETITLVARHLHDLGVKRIVVANRTLERASILAAEFGAHAVLLSDIPAELVNSDIVISSTASQLPILGKGAVESALKLRKHKPIFMVDIAVPRDIEPEVGELDDVYLYSVDDLHEVVAENLKSRQGAALAAEQLVSVGAEDFMSRLRELAAVDVLRAYRQQSERLRDEELSKAQRMLANGSNAEDVLIQLARGLTNKLLHAPSVQLKKLSAEGRVDALAMAQELFALGEGSTDKTPQ.

Substrate contacts are provided by residues 49 to 52 (TCNR), Ser107, 112 to 114 (EPQ), and Gln118. Cys50 functions as the Nucleophile in the catalytic mechanism. Residue 187 to 192 (GAGETI) participates in NADP(+) binding.

It belongs to the glutamyl-tRNA reductase family. Homodimer.

It carries out the reaction (S)-4-amino-5-oxopentanoate + tRNA(Glu) + NADP(+) = L-glutamyl-tRNA(Glu) + NADPH + H(+). It participates in porphyrin-containing compound metabolism; protoporphyrin-IX biosynthesis; 5-aminolevulinate from L-glutamyl-tRNA(Glu): step 1/2. Catalyzes the NADPH-dependent reduction of glutamyl-tRNA(Glu) to glutamate 1-semialdehyde (GSA). The polypeptide is Glutamyl-tRNA reductase (Pseudomonas syringae pv. tomato (strain ATCC BAA-871 / DC3000)).